Here is a 767-residue protein sequence, read N- to C-terminus: uncharacterized protein (767 aa).

Disordered regions lie at residues 171–209 (LPVW…LRTP), 314–340 (ETEA…CQEE), and 533–566 (RDHG…PRGF). Composition is skewed to basic and acidic residues over residues 322–331 (PDPRPEKDAK) and 552–564 (ETKD…RDPR).

This is an uncharacterized protein from Homo sapiens (Human).